A 610-amino-acid chain; its full sequence is GATOR complex protein NPRL3 (610 aa).

The residue at position 437 (serine 437) is a Phosphoserine. Residues 474 to 501 (REASEDHSSLASDNIAVQPSSSHKSNFS) form a disordered region. Residues 482-501 (SLASDNIAVQPSSSHKSNFS) are compositionally biased toward polar residues.

It belongs to the NPR3 family. As to quaternary structure, component of the GATOR complex consisting of mio, Nup44A/Seh1, Im11, Nplr3, Nplr2, Wdr24, Wdr59 and Sec13. Within the GATOR complex, probable component of the GATOR1 subcomplex which is likely composed of Iml1, Nplr2 and Nplr3. Interacts with Nprl2.

The protein resides in the cytoplasm. The protein localises to the lysosome. Its function is as follows. An essential component of the GATOR subcomplex GATOR1 which functions as an inhibitor of the amino acid-sensing branch of the TORC1 signaling pathway. The two GATOR subcomplexes, GATOR1 and GATOR2, regulate the TORC1 pathway in order to mediate metabolic homeostasis, female gametogenesis and the response to amino acid limitation and complete starvation. The function of GATOR1 in negatively regulating the TORC1 pathway is essential for maintaining baseline levels of TORC1 activity under nutrient rich conditions, and for promoting survival during amino acid or complete starvation by inhibiting TORC1-dependent cell growth and promoting catabolic metabolism and autophagy. In addition, this inhibition of TORC1 is necessary to maintain female fertility under normal conditions and during periods of nutrient stress. GATOR1 and GATOR2 act at different stages of oogenesis to regulate TORC1 in order to control meiotic entry and promote oocyte growth and development. After exactly four mitotic cyst divisions, the GATOR1 complex members (Iml1, Nprl2 and Nprl3) down-regulate TORC1 to slow cellular metabolism and promote the mitotic/meiotic transition. At later stages of oogenesis, the mio and Nup44A components of the GATOR2 complex inhibit GATOR1 and thus activate TORC1 to promote meiotic progression, and drive oocyte growth and development. In Drosophila melanogaster (Fruit fly), this protein is GATOR complex protein NPRL3.